The primary structure comprises 135 residues: Probable disulfide formation protein (135 aa).

The chain crosses the membrane as a helical span at residues 7–26 (SYCLYFAWLVSCIGTLMSVY). C36 and C39 are oxidised to a cystine. 2 helical membrane-spanning segments follow: residues 41–60 (YQRI…AYLD) and 67–84 (YALP…YQVC). C96 and C101 form a disulfide bridge. A helical transmembrane segment spans residues 109-131 (GFITMPMASALAFFAIANLLIFA).

It belongs to the DsbB family. BdbC subfamily.

The protein localises to the cell inner membrane. Its function is as follows. Required for disulfide bond formation in some proteins. The sequence is that of Probable disulfide formation protein from Chlamydia muridarum (strain MoPn / Nigg).